A 129-amino-acid polypeptide reads, in one-letter code: 8-oxo-dGTP diphosphatase (129 aa).

The Nudix hydrolase domain maps to 1–129; sequence MKKLQIAVGI…EPVIAKLKRL (129 aa). Residues Arg23, His28, and 34–37 each bind 8-oxo-dGTP; that span reads EFPG. Residues Gly37 and Glu57 each coordinate Mg(2+). A Nudix box motif is present at residues 38–59; the sequence is GKIEMGETPEQAVVRELQEEVG. Asn119 contacts 8-oxo-dGTP.

Belongs to the Nudix hydrolase family. As to quaternary structure, monomer. Mg(2+) serves as cofactor.

The catalysed reaction is 8-oxo-dGTP + H2O = 8-oxo-dGMP + diphosphate + H(+). The enzyme catalyses 8-oxo-GTP + H2O = 8-oxo-GMP + diphosphate + H(+). It catalyses the reaction 8-oxo-dGDP + H2O = 8-oxo-dGMP + phosphate + H(+). It carries out the reaction 8-oxo-GDP + H2O = 8-oxo-GMP + phosphate + H(+). Functionally, specifically hydrolyzes both 8-oxo-deoxyguanosine triphosphate (8-oxo-dGTP) and 8-oxo-guanosine triphosphate (8-oxo-GTP) to the related monophosphates, thereby cleaning up the nucleotide pools and preventing misincorporation of 8-oxoGua into DNA and RNA. It prevents replicational errors by removing an oxidatively damaged form of guanine (8-oxo-dGTP) from DNA and the nucleotide pool. 8-oxo-dGTP can be inserted opposite dA and dC residues of template DNA with almost equal efficiency thus leading to A.T to G.C transversions. MutT may also ensure transcriptional fidelity, removing 8-oxo-GTP from the ribonucleotide triphosphate pool. However, due to the lower efficiency of RNA polymerase 8-oxo-GTP incorporation, MutT is probably not a major contributor to transcriptional fidelity. It also hydrolyzes 8-oxo-dGDP and 8-oxo-GDP to their monophosphate form. In vitro, can also use dGTP, dGDP and other various nucleoside di- and triphosphates, with much lower efficiency. Works cooperatively with MutM and MutY to prevent accumulation in the DNA of oxidized guanine residues. This Escherichia coli (strain K12) protein is 8-oxo-dGTP diphosphatase.